The chain runs to 194 residues: Imidazoleglycerol-phosphate dehydratase (194 aa).

The protein belongs to the imidazoleglycerol-phosphate dehydratase family.

Its subcellular location is the cytoplasm. The catalysed reaction is D-erythro-1-(imidazol-4-yl)glycerol 3-phosphate = 3-(imidazol-4-yl)-2-oxopropyl phosphate + H2O. Its pathway is amino-acid biosynthesis; L-histidine biosynthesis; L-histidine from 5-phospho-alpha-D-ribose 1-diphosphate: step 6/9. The polypeptide is Imidazoleglycerol-phosphate dehydratase (Oceanobacillus iheyensis (strain DSM 14371 / CIP 107618 / JCM 11309 / KCTC 3954 / HTE831)).